Here is a 150-residue protein sequence, read N- to C-terminus: Arginine repressor (150 aa).

The protein belongs to the ArgR family.

It is found in the cytoplasm. The protein operates within amino-acid biosynthesis; L-arginine biosynthesis [regulation]. Functionally, regulates arginine biosynthesis genes. This Clostridium botulinum (strain Loch Maree / Type A3) protein is Arginine repressor.